The chain runs to 281 residues: Probable endonuclease 4 (281 aa).

H78, H118, E149, D181, H184, H216, D229, H231, and E260 together coordinate Zn(2+).

The protein belongs to the AP endonuclease 2 family. Zn(2+) serves as cofactor.

The enzyme catalyses Endonucleolytic cleavage to 5'-phosphooligonucleotide end-products.. In terms of biological role, endonuclease IV plays a role in DNA repair. It cleaves phosphodiester bonds at apurinic or apyrimidinic (AP) sites, generating a 3'-hydroxyl group and a 5'-terminal sugar phosphate. The polypeptide is Probable endonuclease 4 (Thermoplasma acidophilum (strain ATCC 25905 / DSM 1728 / JCM 9062 / NBRC 15155 / AMRC-C165)).